The sequence spans 784 residues: Protein translocase subunit SecA 2 (784 aa).

Residues Q94, 112 to 116 (GEGKT), and D501 each bind ATP.

The protein belongs to the SecA family. Monomer and homodimer. Part of the essential Sec protein translocation apparatus which comprises SecA, SecYEG and auxiliary proteins SecDF. Other proteins may also be involved.

It localises to the cell membrane. Its subcellular location is the cytoplasm. The enzyme catalyses ATP + H2O + cellular proteinSide 1 = ADP + phosphate + cellular proteinSide 2.. Functionally, part of the Sec protein translocase complex. Interacts with the SecYEG preprotein conducting channel. Has a central role in coupling the hydrolysis of ATP to the transfer of proteins into and across the cell membrane, serving as an ATP-driven molecular motor driving the stepwise translocation of polypeptide chains across the membrane. The sequence is that of Protein translocase subunit SecA 2 from Mycolicibacterium smegmatis (strain ATCC 700084 / mc(2)155) (Mycobacterium smegmatis).